The primary structure comprises 62 residues: Large ribosomal subunit protein bL28 (62 aa).

The interval M1–K28 is disordered.

This sequence belongs to the bacterial ribosomal protein bL28 family.

The protein is Large ribosomal subunit protein bL28 of Bacillus cytotoxicus (strain DSM 22905 / CIP 110041 / 391-98 / NVH 391-98).